Consider the following 123-residue polypeptide: Small ribosomal subunit protein uS12cz/uS12cy (123 aa).

This sequence belongs to the universal ribosomal protein uS12 family. As to quaternary structure, part of the 30S ribosomal subunit.

It is found in the plastid. It localises to the chloroplast. With S4 and S5 plays an important role in translational accuracy. Located at the interface of the 30S and 50S subunits. This Atropa belladonna (Belladonna) protein is Small ribosomal subunit protein uS12cz/uS12cy (rps12-A).